A 159-amino-acid polypeptide reads, in one-letter code: Endoribonuclease YbeY (159 aa).

3 residues coordinate Zn(2+): His125, His129, and His135.

This sequence belongs to the endoribonuclease YbeY family. Zn(2+) serves as cofactor.

It localises to the cytoplasm. Functionally, single strand-specific metallo-endoribonuclease involved in late-stage 70S ribosome quality control and in maturation of the 3' terminus of the 16S rRNA. The polypeptide is Endoribonuclease YbeY (Enterococcus faecalis (strain ATCC 700802 / V583)).